The primary structure comprises 207 residues: ATP-dependent Clp protease proteolytic subunit (207 aa).

The active-site Nucleophile is Ser112. Residue His137 is part of the active site.

The protein belongs to the peptidase S14 family. In terms of assembly, fourteen ClpP subunits assemble into 2 heptameric rings which stack back to back to give a disk-like structure with a central cavity, resembling the structure of eukaryotic proteasomes.

It localises to the cytoplasm. The catalysed reaction is Hydrolysis of proteins to small peptides in the presence of ATP and magnesium. alpha-casein is the usual test substrate. In the absence of ATP, only oligopeptides shorter than five residues are hydrolyzed (such as succinyl-Leu-Tyr-|-NHMec, and Leu-Tyr-Leu-|-Tyr-Trp, in which cleavage of the -Tyr-|-Leu- and -Tyr-|-Trp bonds also occurs).. Cleaves peptides in various proteins in a process that requires ATP hydrolysis. Has a chymotrypsin-like activity. Plays a major role in the degradation of misfolded proteins. The protein is ATP-dependent Clp protease proteolytic subunit of Bacteroides fragilis (strain ATCC 25285 / DSM 2151 / CCUG 4856 / JCM 11019 / LMG 10263 / NCTC 9343 / Onslow / VPI 2553 / EN-2).